A 545-amino-acid polypeptide reads, in one-letter code: Zinc finger protein 697 (545 aa).

The disordered stretch occupies residues 1 to 143; it reads MKQEDNQGVC…EQPAPPVLPW (143 aa). A Glycyl lysine isopeptide (Lys-Gly) (interchain with G-Cter in SUMO2) cross-link involves residue K2. Over residues 23–36 the composition is skewed to acidic residues; sequence DFEDSEDREGDPEE. The segment covering 45 to 55 has biased composition (basic and acidic residues); that stretch reads DTNKREGHPEP. Acidic residues-rich tracts occupy residues 79–94 and 118–135; these read LSEE…EDDQ and EDDD…EEEQ. 11 consecutive C2H2-type zinc fingers follow at residues 189 to 211, 261 to 283, 289 to 311, 317 to 339, 353 to 375, 381 to 403, 409 to 431, 437 to 459, 465 to 487, 493 to 515, and 521 to 543; these read TICP…QRIH, FRCG…LRLH, NLCA…RRLH, YPCP…RRAH, FACG…QRIH, HGCG…QRVH, YMCS…KRTH, YVCR…LRVH, FRCG…QRTH, YTCI…RRIH, and HKCA…QKLH.

Belongs to the krueppel C2H2-type zinc-finger protein family.

The protein resides in the nucleus. In terms of biological role, RNA-interacting protein with a high number of miRNA targets. Acts as a damage-induced regulator of muscle remodeling by mediating the interferon gamma response in muscle cells. The chain is Zinc finger protein 697 from Homo sapiens (Human).